We begin with the raw amino-acid sequence, 176 residues long: Ribosome maturation factor RimM (176 aa).

The PRC barrel domain maps to 93–166; the sequence is ADEYYHADLI…QVVIEPPNEI (74 aa).

The protein belongs to the RimM family. Binds ribosomal protein uS19.

It localises to the cytoplasm. Its function is as follows. An accessory protein needed during the final step in the assembly of 30S ribosomal subunit, possibly for assembly of the head region. Essential for efficient processing of 16S rRNA. May be needed both before and after RbfA during the maturation of 16S rRNA. It has affinity for free ribosomal 30S subunits but not for 70S ribosomes. The chain is Ribosome maturation factor RimM from Rhodopseudomonas palustris (strain ATCC BAA-98 / CGA009).